The following is a 381-amino-acid chain: D-rhamnosyltransferase WbpZ (381 aa).

Substrate contacts are provided by E19, H116, K206, and V252.

The protein belongs to the glycosyltransferase group 1 family. Glycosyltransferase 4 subfamily.

The protein localises to the cytoplasm. It carries out the reaction GDP-alpha-D-rhamnose + N-acetyl-alpha-D-glucosaminyl-di-trans,octa-cis-undecaprenyl diphosphate = alpha-D-rhamnosyl-(1-&gt;3)-N-acetyl-alpha-D-glucosaminyl-1-diphospho-di-trans,octa-cis-undecaprenol + GDP + H(+). The catalysed reaction is GDP-alpha-D-rhamnose + N-acetyl-alpha-D-galactosaminyl-di-trans,octa-cis-undecaprenyl diphosphate = alpha-D-rhamnosyl-(1-&gt;3)-N-acetyl-alpha-D-galactosaminyl-1-diphospho-di-trans,octa-cis-undecaprenol + GDP + H(+). The enzyme catalyses N-acetyl-alpha-D-glucosaminyl-di-trans,octa-cis-undecaprenyl diphosphate + GDP-alpha-D-mannose = alpha-D-mannosyl-(1-&gt;3)-N-acetyl-alpha-D-glucosaminyl-di-trans,octa-cis-undecaprenyl diphosphate + GDP + H(+). It catalyses the reaction N-acetyl-alpha-D-galactosaminyl-di-trans,octa-cis-undecaprenyl diphosphate + GDP-alpha-D-mannose = alpha-D-mannosyl-(1-&gt;3)-N-acetyl-alpha-D-galctosaminyl-1-diphospho-di-trans,octa-cis-undecaprenol + GDP + H(+). The protein operates within lipopolysaccharide biosynthesis; LPS oligosaccharide biosynthesis. Not activated by dithiothreitol (DTT) using GlcNAc-alpha-PO(3)-PO(3)-phenylundecyl (GlcNAc-PP-PhU) as acceptor substrate. 0.25% Triton X-100 and 0.125% NP-40 increases the activity 2.5-fold and 2-fold, respectively. 0.125% octyl glucoside has little effect on activity. Slightly increased activity with Mg(2+) and Pb(2+), while no effect with Mn(2+), Co(2+), Ni(2+), Cu(2+), Zn(2+), Ca(2+) or EDTA. Not inhibited by N-butyryl-galactosamine-alpha-benzyl or N-butyryl-glucosamine-beta-benzyl. Bis-imidazolium salts having aliphatic spacer groups with 4 or 6 carbons have little effect on activity, but spacer groups of 18-22 aliphatic carbons inhibit activity, with the most potent inhibitor being bis-imidazolium salt having a 20-carbon chain spacer length. Functionally, non-processive alpha-1,3-D-rhamnosyltransferase. Catalyzes the transfer of one D-rhamnose (D-Rha) residue from donor substrate GDP-D-Rha in alpha-1-3 linkage to both GlcNAc- and GalNAc-diphosphate-lipid acceptor substrates. Is also able to transfer D-mannose (D-Man) to these acceptors at a lower level. Nucleotide sugars GDP-D-Rha, GDP-Fuc, UDP-Gal, UDP-GalNAc, UDP-GlcNAc and CMP-sialic acid cannot act as donor substrates. Only compounds with a diphosphate as the aglycone group can act as acceptor substrates. No activity is detected with compounds containing a diphosphate mimic. Fluorescent undecyl-anthracenyl group-containing compounds, such as GlcNAc-PO(3)-PO(3)-AnthrU and GalNAc-PO(3)-PO(3)-AnthrU, are also good acceptor substrates. Involved in the biosynthesis of the common polysaccharide antigen (CPA), also called A band, which is one of the two major cell surface O-antigens of the P.aeruginosa lipopolysaccharide. Involved in susceptibility to antibiotic colistin. The sequence is that of D-rhamnosyltransferase WbpZ from Pseudomonas aeruginosa (strain ATCC 15692 / DSM 22644 / CIP 104116 / JCM 14847 / LMG 12228 / 1C / PRS 101 / PAO1).